The sequence spans 190 residues: Ribosome hibernation promotion factor (190 aa).

The protein belongs to the HPF/YfiA ribosome-associated protein family. Long HPF subfamily. Interacts with 100S ribosomes.

It is found in the cytoplasm. Functionally, required for dimerization of active 70S ribosomes into 100S ribosomes in stationary phase; 100S ribosomes are translationally inactive and sometimes present during exponential growth. In Rhizobium meliloti (strain 1021) (Ensifer meliloti), this protein is Ribosome hibernation promotion factor.